Here is a 180-residue protein sequence, read N- to C-terminus: Signaling threshold-regulating transmembrane adapter 1 (180 aa).

Topologically, residues 1–24 are extracellular; the sequence is MSRDYNCTTDDQLAWGIPSISHAW. An N-linked (GlcNAc...) asparagine glycan is attached at Asn-6. Residues 25 to 45 form a helical; Signal-anchor for type III membrane protein membrane-spanning segment; sequence GLWALLGVVTVLLLISLAALL. The Cytoplasmic segment spans residues 46–180; that stretch reads SQWTRGRRRN…AYANSQPAPS (135 aa). Residues Ser-63 and Ser-66 each carry the phosphoserine modification. A Phosphotyrosine modification is found at Tyr-73. The segment at 73–76 is interaction with GRB2; that stretch reads YGNL. Residues 81-103 form a disordered region; the sequence is TGRLSQEPRSEEQDPPSSGGLAR. Phosphoserine is present on residues Ser-85 and Ser-90. A phosphotyrosine mark is found at Tyr-111, Tyr-132, and Tyr-153. Positions 130-135 are interaction with PTPN11; that stretch reads IKYCEV. The interaction with CSK stretch occupies residues 153–156; it reads YASV. Ser-166 bears the Phosphoserine mark. Phosphotyrosine is present on Tyr-172. Residues 172-175 are interaction with GRB2; the sequence is YANS.

Homodimer; disulfide-linked. When phosphorylated, interacts with PTPN11/SHP2, GRB2 and CSK. Post-translationally, phosphorylated on tyrosines upon TCR activation; which leads to the recruitment of PTPN11, GRB2 and CSK. In terms of tissue distribution, expressed in thymus and spleen, with highest levels in immature thymocytes (at protein level).

It localises to the cell membrane. In terms of biological role, negatively regulates T-cell antigen receptor (TCR)-mediated signaling. Involved in positive selection of T-cells. The protein is Signaling threshold-regulating transmembrane adapter 1 (Sit1) of Mus musculus (Mouse).